Reading from the N-terminus, the 558-residue chain is MTKFVFVTGGVVSSIGKGIVAASLGRLFKSRDYSVSILKLDPYINVDPGTMSPFQHGEVFVTDDGAETDLDLGHYERFTDTPMSRLNSVTTGSIYQAVINKERRGDYMGGTVQVIPHITNEIKERIHRVAKNTNPDIVIIEIGGTVGDIESLPFLEAIRQFRKEVGRNNVVYMHVTLIPWIPAAGEMKTKPTQHSVKELRSIGIQPDVLVCRCDRPLQPGLKEKLSAFCDVPVASVIMSQDASTIYQVPLNLEEEGLAQQTLELLNLEPRQPDLSQWRTLVQQMQSPSKQIEVALVGKYVQLSDAYLSVVEALGHAAIATNSVVKIRWVSAEDLENDSAEQHLEGVSGIVVPGGFGVRGVDGKVRAIEYARHHNIPFLGLCMGMQCSVIEWARNIAHLEKANSAEFDRESPNPVINLLPEQQDVVDLGGTMRLGLYPCRLTPDTQTFALYKQEVVYERHRHRYEFNNAYRSLFLETGYVISGTSPDGRLVEIIELPGHPFFIATQFHPEFRSRPSTPHPLFLGFVKASVDYNHVSLDSKIQTHIELVTEENTPSIALG.

Positions 1–267 are amidoligase domain; that stretch reads MTKFVFVTGG…AQQTLELLNL (267 aa). S13 is a binding site for CTP. Residue S13 participates in UTP binding. ATP-binding positions include 14–19 and D71; that span reads SIGKGI. Mg(2+) is bound by residues D71 and E141. Residues 148-150, 188-193, and K224 contribute to the CTP site; these read DIE and KTKPTQ. Residues 188–193 and K224 contribute to the UTP site; that span reads KTKPTQ. The Glutamine amidotransferase type-1 domain occupies 292-534; sequence EVALVGKYVQ…VKASVDYNHV (243 aa). G354 is an L-glutamine binding site. C381 acts as the Nucleophile; for glutamine hydrolysis in catalysis. Residues 382–385, E405, and R462 contribute to the L-glutamine site; that span reads MGMQ. Residues H507 and E509 contribute to the active site.

The protein belongs to the CTP synthase family. Homotetramer.

It catalyses the reaction UTP + L-glutamine + ATP + H2O = CTP + L-glutamate + ADP + phosphate + 2 H(+). The enzyme catalyses L-glutamine + H2O = L-glutamate + NH4(+). The catalysed reaction is UTP + NH4(+) + ATP = CTP + ADP + phosphate + 2 H(+). It functions in the pathway pyrimidine metabolism; CTP biosynthesis via de novo pathway; CTP from UDP: step 2/2. Allosterically activated by GTP, when glutamine is the substrate; GTP has no effect on the reaction when ammonia is the substrate. The allosteric effector GTP functions by stabilizing the protein conformation that binds the tetrahedral intermediate(s) formed during glutamine hydrolysis. Inhibited by the product CTP, via allosteric rather than competitive inhibition. Its function is as follows. Catalyzes the ATP-dependent amination of UTP to CTP with either L-glutamine or ammonia as the source of nitrogen. Regulates intracellular CTP levels through interactions with the four ribonucleotide triphosphates. The chain is CTP synthase from Gloeothece citriformis (strain PCC 7424) (Cyanothece sp. (strain PCC 7424)).